The primary structure comprises 433 residues: 26S proteasome regulatory subunit 7 (433 aa).

Residues Met1 to Ile22 form a disordered region. Over residues Asp8–Ile22 the composition is skewed to basic and acidic residues. Position 116 is an N6-acetyllysine (Lys116). Gly216–Thr223 serves as a coordination point for ATP. At Lys422 the chain carries N6-acetyllysine.

The protein belongs to the AAA ATPase family. Component of the 19S proteasome regulatory particle complex. The 26S proteasome consists of a 20S core particle (CP) and two 19S regulatory subunits (RP). The regulatory particle is made of a lid composed of 9 subunits, a base containing 6 ATPases including PSMC2 and few additional components. Interacts with NDC80 and SQSTM1. Interacts with PAAF1. Interacts with TRIM5. Monoubiquitinated by RNF181. Post-translationally, phosphorylated. Dephosphorylated by UBLCP1 which impairs PSMC2 ATPase activity and disrupts 26S proteasome assembly.

The protein localises to the cytoplasm. In terms of biological role, component of the 26S proteasome, a multiprotein complex involved in the ATP-dependent degradation of ubiquitinated proteins. This complex plays a key role in the maintenance of protein homeostasis by removing misfolded or damaged proteins, which could impair cellular functions, and by removing proteins whose functions are no longer required. Therefore, the proteasome participates in numerous cellular processes, including cell cycle progression, apoptosis, or DNA damage repair. PSMC2 belongs to the heterohexameric ring of AAA (ATPases associated with diverse cellular activities) proteins that unfolds ubiquitinated target proteins that are concurrently translocated into a proteolytic chamber and degraded into peptides. This Rattus norvegicus (Rat) protein is 26S proteasome regulatory subunit 7 (Psmc2).